Here is a 940-residue protein sequence, read N- to C-terminus: Serine/threonine-protein kinase PLK4 (940 aa).

A Protein kinase domain is found at 12–265; that stretch reads FKVLTLLGKG…LSAVLDHPFM (254 aa). ATP is bound by residues 18-26 and lysine 41; that span reads LGKGSFACV. The active-site Proton acceptor is the aspartate 136. 2 disordered regions span residues 262-353 and 409-529; these read HPFM…DLSR and RLFP…DAFV. Low complexity predominate over residues 273 to 305; that stretch reads SKDSGSSNGGSIDSGIATISTASNATNNSSSSR. 3 stretches are compositionally biased toward polar residues: residues 337–349, 440–465, and 494–519; these read FKSG…NSQD, NPAS…QPWF, and GTQT…QHNN. In terms of domain architecture, Cryptic POLO box 1 (CPB1) spans 563-676; sequence CLKKSFPPLC…TKFVQLVKSK (114 aa). In terms of domain architecture, Cryptic POLO box 2 (CPB2) spans 677-791; the sequence is TPKVTLYTKF…GRRPVNPVPP (115 aa). Positions 857–935 constitute a POLO box domain; that stretch reads KVLKSIFVPN…LSSILGLLAN (79 aa).

This sequence belongs to the protein kinase superfamily. Ser/Thr protein kinase family. CDC5/Polo subfamily. In terms of assembly, homodimer. In terms of processing, ubiquitinated; leading to its degradation by the proteasome.

It is found in the cytoplasm. The protein resides in the cytoskeleton. It localises to the microtubule organizing center. Its subcellular location is the centrosome. The protein localises to the centriole. The catalysed reaction is L-seryl-[protein] + ATP = O-phospho-L-seryl-[protein] + ADP + H(+). It carries out the reaction L-threonyl-[protein] + ATP = O-phospho-L-threonyl-[protein] + ADP + H(+). In terms of biological role, serine/threonine-protein kinase that plays a central role in centriole duplication. Able to trigger procentriole formation on the surface of the parental centriole cylinder, leading to the recruitment of centriole biogenesis proteins such as sass6, cpap, ccp110, cep135 and gamma-tubulin. When overexpressed, it is able to induce centrosome amplification through the simultaneous generation of multiple procentrioles adjoining each parental centriole during S phase. Its central role in centriole replication suggests a possible role in tumorigenesis, centrosome aberrations being frequently observed in tumors. Also involved in deuterosome-mediated centriole amplification in multiciliated that can generate more than 100 centrioles. In Danio rerio (Zebrafish), this protein is Serine/threonine-protein kinase PLK4.